The sequence spans 115 residues: Large ribosomal subunit protein bL20 (115 aa).

The protein belongs to the bacterial ribosomal protein bL20 family.

Functionally, binds directly to 23S ribosomal RNA and is necessary for the in vitro assembly process of the 50S ribosomal subunit. It is not involved in the protein synthesizing functions of that subunit. This chain is Large ribosomal subunit protein bL20, found in Chlorobium luteolum (strain DSM 273 / BCRC 81028 / 2530) (Pelodictyon luteolum).